Consider the following 408-residue polypeptide: Epsin-3 (408 aa).

Serine 2 is modified (N-acetylserine). The 134-residue stretch at 24–157 folds into the ENTH domain; that stretch reads NVVFNYTEME…SDDNKIRAER (134 aa). The interval 162–182 is disordered; that stretch reads ETAKKYKGVAGGSASADGSLN. Phosphoserine is present on residues serine 196, serine 198, serine 203, serine 212, and serine 223. Disordered stretches follow at residues 199-322 and 338-408; these read ADFD…ITPA and TAKA…LLSF. A compositionally biased stretch (acidic residues) spans 201–210; that stretch reads FDSDNEDNED. Residues 211 to 231 show a composition bias toward polar residues; sequence GSFSQNGYNDNASRATSTPGQ. Basic and acidic residues predominate over residues 249 to 263; it reads KPSKELIQEDEKKAD. A compositionally biased stretch (acidic residues) spans 264–273; sequence EEEDDDDEFS. Over residues 279-317 the composition is skewed to polar residues; it reads VPVTNPANSFNLLNTSPIEGMPATTSSMPFYNSSTTDQG. The segment covering 338–361 has biased composition (low complexity); the sequence is TAKASAEAPSAPKASQAKAAASNP. Polar residues-rich tracts occupy residues 362 to 371 and 388 to 398; these read VSNSTTALST and QQEQNTNNNHT. Positions 399-408 are enriched in basic and acidic residues; the sequence is SSKEIDLLSF.

As to quaternary structure, interacts with the clathrin adapter GGA2, and VPS27.

It localises to the cytoplasm. Its subcellular location is the golgi apparatus. The protein resides in the trans-Golgi network membrane. It is found in the cytoplasmic vesicle. The protein localises to the clathrin-coated vesicle membrane. Functionally, involved in the recruitment of clathrin to the Golgi network and endosomes to form clathrin coated vesicles. Plays a role in the trafficking of clathrin between the Golgi network and endosomes. Binds to membranes enriched in phosphatidylinositol-3,5-bisphosphate (PtdIns(3,5)P2) and, in association with VPS27, is involved in protein sorting at the multivesicular body (MVB). The protein is Epsin-3 (ENT3) of Saccharomyces cerevisiae (strain ATCC 204508 / S288c) (Baker's yeast).